The following is a 164-amino-acid chain: Endoribonuclease YbeY (164 aa).

3 residues coordinate Zn(2+): His-130, His-134, and His-140.

The protein belongs to the endoribonuclease YbeY family. Zn(2+) is required as a cofactor.

The protein resides in the cytoplasm. Its function is as follows. Single strand-specific metallo-endoribonuclease involved in late-stage 70S ribosome quality control and in maturation of the 3' terminus of the 16S rRNA. This chain is Endoribonuclease YbeY, found in Streptococcus mutans serotype c (strain ATCC 700610 / UA159).